A 317-amino-acid chain; its full sequence is Lipoyl synthase (317 aa).

The tract at residues M1 to P28 is disordered. [4Fe-4S] cluster is bound by residues C64, C69, C75, C90, C94, C97, and S304. In terms of domain architecture, Radical SAM core spans F76 to R293.

It belongs to the radical SAM superfamily. Lipoyl synthase family. [4Fe-4S] cluster serves as cofactor.

Its subcellular location is the cytoplasm. It carries out the reaction [[Fe-S] cluster scaffold protein carrying a second [4Fe-4S](2+) cluster] + N(6)-octanoyl-L-lysyl-[protein] + 2 oxidized [2Fe-2S]-[ferredoxin] + 2 S-adenosyl-L-methionine + 4 H(+) = [[Fe-S] cluster scaffold protein] + N(6)-[(R)-dihydrolipoyl]-L-lysyl-[protein] + 4 Fe(3+) + 2 hydrogen sulfide + 2 5'-deoxyadenosine + 2 L-methionine + 2 reduced [2Fe-2S]-[ferredoxin]. It participates in protein modification; protein lipoylation via endogenous pathway; protein N(6)-(lipoyl)lysine from octanoyl-[acyl-carrier-protein]: step 2/2. Catalyzes the radical-mediated insertion of two sulfur atoms into the C-6 and C-8 positions of the octanoyl moiety bound to the lipoyl domains of lipoate-dependent enzymes, thereby converting the octanoylated domains into lipoylated derivatives. In Acidithiobacillus ferrooxidans (strain ATCC 23270 / DSM 14882 / CIP 104768 / NCIMB 8455) (Ferrobacillus ferrooxidans (strain ATCC 23270)), this protein is Lipoyl synthase.